We begin with the raw amino-acid sequence, 714 residues long: Fatty acid oxidation complex subunit alpha (714 aa).

The enoyl-CoA hydratase stretch occupies residues 1 to 190; the sequence is MDMTSAFTLN…KSGLVDEIVP (190 aa). The tract at residues 306 to 714 is 3-hydroxyacyl-CoA dehydrogenase; that stretch reads GTLDSIGILG…FWKTSATDRH (409 aa).

The protein in the N-terminal section; belongs to the enoyl-CoA hydratase/isomerase family. In the central section; belongs to the 3-hydroxyacyl-CoA dehydrogenase family. Heterotetramer of two alpha chains (FadJ) and two beta chains (FadI).

The protein localises to the cytoplasm. It catalyses the reaction a (3S)-3-hydroxyacyl-CoA = a (2E)-enoyl-CoA + H2O. The catalysed reaction is a 4-saturated-(3S)-3-hydroxyacyl-CoA = a (3E)-enoyl-CoA + H2O. The enzyme catalyses a (3S)-3-hydroxyacyl-CoA + NAD(+) = a 3-oxoacyl-CoA + NADH + H(+). It carries out the reaction (3S)-3-hydroxybutanoyl-CoA = (3R)-3-hydroxybutanoyl-CoA. The protein operates within lipid metabolism; fatty acid beta-oxidation. Its function is as follows. Catalyzes the formation of a hydroxyacyl-CoA by addition of water on enoyl-CoA. Also exhibits 3-hydroxyacyl-CoA epimerase and 3-hydroxyacyl-CoA dehydrogenase activities. This chain is Fatty acid oxidation complex subunit alpha, found in Escherichia fergusonii (strain ATCC 35469 / DSM 13698 / CCUG 18766 / IAM 14443 / JCM 21226 / LMG 7866 / NBRC 102419 / NCTC 12128 / CDC 0568-73).